Reading from the N-terminus, the 629-residue chain is MNATGAGYPLASLYIGDLHPDVTEAMLYEKFSPAGPIMSIRVCRDIATRRSLSYAYINFQQPADAERALDTMNFEVIKGRPIRIMWSQRDPGLRKSGVGNVFIKNLDESIDNKALYDTFSAFGNILSCKVVCDEHGSRGYGFVHFETHEAANRAIQTMNGMLLNDRKVFVGHFKSRRERELEYGAKVMEFTNVYIKNFGEDMDDKRLREIFSAFGNTLSVKVMMDDSGRSRGFGFVNYGNHEEAQKAVSEMNGKEVNGRMIYVGRAQKRIERQSELKRKFEQIKQERINRYQGVNLYVKNLDDGIDDDRLRKEFLPYGTITSAKVMTEGGHSKGFGFVCFSSPEEATKAVTEMNGRIVSTKPLYVALAQRKEERKAILTNQYMQRLATMRAMPGPLLGSFQQPANYFLSAMPQPPNRTFYSPNPVAPVRPAPQWASHQSRPPQYQPPTPLMRAVQPRRMSSNISTMKQASTQVPRVAQHSQRVANIGTQTAGARAQVNPSMMRTMPHYKYSCGVRNVQPIVSSTHLQQVMEPAVLMQGQEPLTASLLAGAPPQEQKQMLGERIYPVIHEMHPTLAGKITGMLLEIDNSELLHMLESPESLHSKVEEAVAVLQAHQAKENAQKSAQPSLI.

RRM domains are found at residues 11–89, 99–175, 191–268, and 294–370; these read ASLY…WSQR, GNVF…HFKS, TNVY…RAQK, and VNLY…LAQR. The PABC domain occupies 539–616; sequence QEPLTASLLA…AVAVLQAHQA (78 aa).

It belongs to the polyadenylate-binding protein type-1 family. In terms of assembly, interacts with dazl in an RNA-independent manner. The C-terminus can self-associate and also interact with the C-terminus of pabpc1, independently of RNA. RRM 1 and RRM 2 interact with both eif4g1 and paip1, and the C-terminus also interacts with paip1. Prior to oocyte maturation, found in a complex with dazl and pum2 proteins and spdy1 mRNA; pum2 dissociates from the complex during maturation. Interacts with the translation termination factor sup35/erf3. In terms of tissue distribution, expressed in adult testis, but at a reduced level compared to oocytes.

It is found in the cytoplasm. In terms of biological role, binds and protects the poly(A) tail of mRNA with or without an AU-rich element (ARE) and prevents mRNA deadenylation. Stimulates the translation of mRNAs to which it is bound during early development. The polypeptide is Embryonic polyadenylate-binding protein A (epabp-a) (Xenopus laevis (African clawed frog)).